The sequence spans 492 residues: Cytochrome P450 2A2 (492 aa).

Heme is bound at residue Cys-437.

Belongs to the cytochrome P450 family. Heme is required as a cofactor. As to expression, liver specific.

The protein localises to the endoplasmic reticulum membrane. The protein resides in the microsome membrane. It catalyses the reaction an organic molecule + reduced [NADPH--hemoprotein reductase] + O2 = an alcohol + oxidized [NADPH--hemoprotein reductase] + H2O + H(+). Highly active in the 15-alpha-hydroxylation of testosterone. This is Cytochrome P450 2A2 (Cyp2a2) from Rattus norvegicus (Rat).